A 129-amino-acid polypeptide reads, in one-letter code: uncharacterized protein (129 aa).

Positions 1 to 17 are cleaved as a signal peptide; sequence MCPECFFLMLFFCGYRA. Residues 26-36 show a composition bias toward low complexity; that stretch reads SSSSSSSFRSS. Residues 26 to 76 are disordered; the sequence is SSSSSSSFRSSPAYGFSGRPPGGAGCRERSQRSCLRPGGLPSLTRNPGLQR.

This is an uncharacterized protein from Escherichia coli O157:H7.